A 334-amino-acid chain; its full sequence is Protein-methionine-sulfoxide reductase catalytic subunit MsrP (334 aa).

Positions 1–44 (MKKIRPLTEADVTAESAFFMQRRQVLKALGISAAALSLPSTAQA) form a signal peptide, tat-type signal. Mo-molybdopterin is bound by residues Asn88, 91 to 92 (YE), Cys146, Thr181, Asn233, Arg238, and 249 to 251 (GIK).

It belongs to the MsrP family. Heterodimer of a catalytic subunit (MsrP) and a heme-binding subunit (MsrQ). It depends on Mo-molybdopterin as a cofactor. Predicted to be exported by the Tat system. The position of the signal peptide cleavage has not been experimentally proven.

The protein resides in the periplasm. It carries out the reaction L-methionyl-[protein] + a quinone + H2O = L-methionyl-(S)-S-oxide-[protein] + a quinol. It catalyses the reaction L-methionyl-[protein] + a quinone + H2O = L-methionyl-(R)-S-oxide-[protein] + a quinol. Its function is as follows. Part of the MsrPQ system that repairs oxidized periplasmic proteins containing methionine sulfoxide residues (Met-O), using respiratory chain electrons. Thus protects these proteins from oxidative-stress damage caused by reactive species of oxygen and chlorine generated by the host defense mechanisms. MsrPQ is essential for the maintenance of envelope integrity under bleach stress, rescuing a wide series of structurally unrelated periplasmic proteins from methionine oxidation, including the primary periplasmic chaperone SurA and the lipoprotein Pal. The catalytic subunit MsrP is non-stereospecific, being able to reduce both (R-) and (S-) diastereoisomers of methionine sulfoxide. This is Protein-methionine-sulfoxide reductase catalytic subunit MsrP from Salmonella arizonae (strain ATCC BAA-731 / CDC346-86 / RSK2980).